A 486-amino-acid polypeptide reads, in one-letter code: Glutamyl-tRNA(Gln) amidotransferase subunit A (486 aa).

Catalysis depends on charge relay system residues Lys-75 and Ser-150. The Acyl-ester intermediate role is filled by Ser-174.

The protein belongs to the amidase family. GatA subfamily. As to quaternary structure, heterotrimer of A, B and C subunits.

It carries out the reaction L-glutamyl-tRNA(Gln) + L-glutamine + ATP + H2O = L-glutaminyl-tRNA(Gln) + L-glutamate + ADP + phosphate + H(+). In terms of biological role, allows the formation of correctly charged Gln-tRNA(Gln) through the transamidation of misacylated Glu-tRNA(Gln) in organisms which lack glutaminyl-tRNA synthetase. The reaction takes place in the presence of glutamine and ATP through an activated gamma-phospho-Glu-tRNA(Gln). This chain is Glutamyl-tRNA(Gln) amidotransferase subunit A, found in Nostoc punctiforme (strain ATCC 29133 / PCC 73102).